We begin with the raw amino-acid sequence, 240 residues long: Methylthioribulose-1-phosphate dehydratase (240 aa).

Cys-99 contacts substrate. Zn(2+) contacts are provided by His-116 and His-118. Glu-145 functions as the Proton donor/acceptor in the catalytic mechanism. Position 201 (His-201) interacts with Zn(2+).

The protein belongs to the aldolase class II family. MtnB subfamily. It depends on Zn(2+) as a cofactor.

It localises to the cytoplasm. It carries out the reaction 5-(methylsulfanyl)-D-ribulose 1-phosphate = 5-methylsulfanyl-2,3-dioxopentyl phosphate + H2O. It functions in the pathway amino-acid biosynthesis; L-methionine biosynthesis via salvage pathway; L-methionine from S-methyl-5-thio-alpha-D-ribose 1-phosphate: step 2/6. Catalyzes the dehydration of methylthioribulose-1-phosphate (MTRu-1-P) into 2,3-diketo-5-methylthiopentyl-1-phosphate (DK-MTP-1-P). In Paracoccidioides lutzii (strain ATCC MYA-826 / Pb01) (Paracoccidioides brasiliensis), this protein is Methylthioribulose-1-phosphate dehydratase.